Consider the following 106-residue polypeptide: Large ribosomal subunit protein eL42 (106 aa).

Belongs to the eukaryotic ribosomal protein eL42 family. Component of the large ribosomal subunit.

It is found in the cytoplasm. Functionally, component of the large ribosomal subunit. The ribosome is a large ribonucleoprotein complex responsible for the synthesis of proteins in the cell. The sequence is that of Large ribosomal subunit protein eL42 (RPL36A) from Papio anubis (Olive baboon).